The sequence spans 235 residues: Class B acid phosphatase (235 aa).

Positions 1–22 (MKNLVKLSLIAMLTAATLPAMA) are cleaved as a signal peptide. The active-site Nucleophile is the D67. Positions 67 and 69 each coordinate Mg(2+). The Proton donor role is filled by D69. Substrate-binding positions include 135 to 136 (TG) and K175. A Mg(2+)-binding site is contributed by D190.

It belongs to the class B bacterial acid phosphatase family. In terms of assembly, homotetramer. Mg(2+) serves as cofactor.

The protein localises to the periplasm. It carries out the reaction a phosphate monoester + H2O = an alcohol + phosphate. In terms of biological role, dephosphorylates several organic phosphate monoesters. Also has a phosphotransferase activity catalyzing the transfer of low-energy phosphate groups from organic phosphate monoesters to free hydroxyl groups of various organic compounds. The chain is Class B acid phosphatase from Aggregatibacter actinomycetemcomitans serotype C (strain D11S-1) (Actinobacillus actinomycetemcomitans).